The sequence spans 216 residues: Protein-L-isoaspartate O-methyltransferase (216 aa).

Ser66 is a catalytic residue.

This sequence belongs to the methyltransferase superfamily. L-isoaspartyl/D-aspartyl protein methyltransferase family.

The protein localises to the cytoplasm. It carries out the reaction [protein]-L-isoaspartate + S-adenosyl-L-methionine = [protein]-L-isoaspartate alpha-methyl ester + S-adenosyl-L-homocysteine. Functionally, catalyzes the methyl esterification of L-isoaspartyl residues in peptides and proteins that result from spontaneous decomposition of normal L-aspartyl and L-asparaginyl residues. It plays a role in the repair and/or degradation of damaged proteins. This chain is Protein-L-isoaspartate O-methyltransferase, found in Colwellia psychrerythraea (strain 34H / ATCC BAA-681) (Vibrio psychroerythus).